Here is a 482-residue protein sequence, read N- to C-terminus: Exodeoxyribonuclease I (482 aa).

Residues 13-194 enclose the Exonuclease domain; sequence LFYDYETFGI…TSDVYATIEL (182 aa). Residues D16, E18, and D187 each contribute to the Mg(2+) site. Residue E18 participates in substrate binding. One can recognise an ExoI SH3-like domain in the interval 203–351; the sequence is PKLFDFFFKY…LVKNVLLKKN (149 aa). The 117-residue stretch at 355–471 folds into the ExoI C-terminal domain; sequence NSLNVDLQIY…DLLKYVFKKY (117 aa).

Monomer. Interacts with ssb (via C-terminus); this interaction stimulates the exonuclease activity by recruiting the enzyme to its substrate. The cofactor is Mg(2+).

It carries out the reaction Exonucleolytic cleavage in the 3'- to 5'-direction to yield nucleoside 5'-phosphates.. Functionally, degrades single-stranded DNA (ssDNA) in a highly processive manner. Also functions as a DNA deoxyribophosphodiesterase that releases deoxyribose-phosphate moieties following the cleavage of DNA at an apurinic/apyrimidinic (AP) site by either an AP endonuclease or AP lyase. The protein is Exodeoxyribonuclease I (sbcB) of Buchnera aphidicola subsp. Schizaphis graminum (strain Sg).